The following is a 101-amino-acid chain: NAD(P)H-quinone oxidoreductase subunit 4L, chloroplastic (101 aa).

Helical transmembrane passes span Met-2–Ile-22, Met-32–Phe-52, and Ile-61–Val-81.

The protein belongs to the complex I subunit 4L family. In terms of assembly, NDH is composed of at least 16 different subunits, 5 of which are encoded in the nucleus.

Its subcellular location is the plastid. It is found in the chloroplast thylakoid membrane. The enzyme catalyses a plastoquinone + NADH + (n+1) H(+)(in) = a plastoquinol + NAD(+) + n H(+)(out). It catalyses the reaction a plastoquinone + NADPH + (n+1) H(+)(in) = a plastoquinol + NADP(+) + n H(+)(out). NDH shuttles electrons from NAD(P)H:plastoquinone, via FMN and iron-sulfur (Fe-S) centers, to quinones in the photosynthetic chain and possibly in a chloroplast respiratory chain. The immediate electron acceptor for the enzyme in this species is believed to be plastoquinone. Couples the redox reaction to proton translocation, and thus conserves the redox energy in a proton gradient. The chain is NAD(P)H-quinone oxidoreductase subunit 4L, chloroplastic from Panax ginseng (Korean ginseng).